Here is a 90-residue protein sequence, read N- to C-terminus: Acylphosphatase (90 aa).

The Acylphosphatase-like domain occupies 5-90; the sequence is CEKFVVSGIV…CREYQGFEIL (86 aa). Active-site residues include Arg20 and Asn38.

It belongs to the acylphosphatase family.

The enzyme catalyses an acyl phosphate + H2O = a carboxylate + phosphate + H(+). In Vibrio vulnificus (strain CMCP6), this protein is Acylphosphatase (acyP).